Consider the following 306-residue polypeptide: MAASENNMEEINPVLRISQLDAIELNKALEQLIWSQFSSCFQGFKPGLLTRFEPEIKASLCLFLWRYTIYTKNATVGQTILNMQYKNDLAVTKKYRPLNKQQKVWFALFLVGGKWLEERSFDLFSNHPFGASFQRTKYFLNAISGLLKFGALLNFLIFLQQGKFATLTERLLGIRSVFSRPQDVRQVGFEYMNREILWHGFAEFLIFLLPLINTQKLKSKLFSWCKPAKSHGVSDPSLAVICKECCLCGEWPAMPHTIGCSHVFCYYCIKSNYMSDMYFTCPKCSSQVHNLQPLEFKIEISEVHTL.

Over 1–15 (MAASENNMEEINPVL) the chain is Peroxisomal matrix. The chain crosses the membrane as a helical span at residues 16–42 (RISQLDAIELNKALEQLIWSQFSSCFQ). Over 43–48 (GFKPGL) the chain is Cytoplasmic. The helical transmembrane segment at 49-74 (LTRFEPEIKASLCLFLWRYTIYTKNA) threads the bilayer. Topologically, residues 75–98 (TVGQTILNMQYKNDLAVTKKYRPL) are peroxisomal matrix. The helical transmembrane segment at 99–125 (NKQQKVWFALFLVGGKWLEERSFDLFS) threads the bilayer. Over 126–134 (NHPFGASFQ) the chain is Cytoplasmic. A helical membrane pass occupies residues 135-161 (RTKYFLNAISGLLKFGALLNFLIFLQQ). Residues 162–188 (GKFATLTERLLGIRSVFSRPQDVRQVG) are Peroxisomal matrix-facing. The chain crosses the membrane as a helical span at residues 189 to 212 (FEYMNREILWHGFAEFLIFLLPLI). Residues 213-306 (NTQKLKSKLF…KIEISEVHTL (94 aa)) lie on the Cytoplasmic side of the membrane. Zn(2+) contacts are provided by C245, C248, C260, H262, C265, C268, C281, and C284. The RING-type zinc-finger motif lies at 245–285 (CCLCGEWPAMPHTIGCSHVFCYYCIKSNYMSDMYFTCPKCS).

This sequence belongs to the pex2/pex10/pex12 family. In terms of assembly, component of the PEX2-PEX10-PEX12 retrotranslocation channel.

The protein resides in the peroxisome membrane. The catalysed reaction is [E2 ubiquitin-conjugating enzyme]-S-ubiquitinyl-L-cysteine + [acceptor protein]-L-cysteine = [E2 ubiquitin-conjugating enzyme]-L-cysteine + [acceptor protein]-S-ubiquitinyl-L-cysteine.. It catalyses the reaction S-ubiquitinyl-[E2 ubiquitin-conjugating enzyme]-L-cysteine + [acceptor protein]-L-lysine = [E2 ubiquitin-conjugating enzyme]-L-cysteine + N(6)-ubiquitinyl-[acceptor protein]-L-lysine.. It participates in protein modification; protein ubiquitination. Functionally, E3 ubiquitin-protein ligase component of a retrotranslocation channel required for peroxisome organization by mediating export of the PEX5 receptor from peroxisomes to the cytosol, thereby promoting PEX5 recycling. The retrotranslocation channel is composed of PEX2, PEX10 and PEX12; each subunit contributing transmembrane segments that coassemble into an open channel that specifically allows the passage of PEX5 through the peroxisomal membrane. PEX2 also regulates peroxisome organization by acting as a E3 ubiquitin-protein ligase. The sequence is that of Peroxisome biogenesis factor 2 from Xenopus laevis (African clawed frog).